The chain runs to 427 residues: uncharacterized protein (427 aa).

This is an uncharacterized protein from Human herpesvirus 7 (strain JI) (HHV-7).